A 234-amino-acid chain; its full sequence is Glutathione S-transferase U16 (234 aa).

The region spanning 5 to 85 is the GST N-terminal domain; it reads EEVKLLGVWY…YIDETWNSSA (81 aa). Glutathione-binding positions include 15–16, 42–43, 56–57, and 69–70; these read SP, SK, KV, and ES. Residues 92–219 enclose the GST C-terminal domain; it reads HPYDRALARF…APEIEKVAEF (128 aa).

This sequence belongs to the GST superfamily. Tau family.

It is found in the cytoplasm. Its subcellular location is the cytosol. It carries out the reaction RX + glutathione = an S-substituted glutathione + a halide anion + H(+). Functionally, may be involved in the conjugation of reduced glutathione to a wide number of exogenous and endogenous hydrophobic electrophiles and have a detoxification role against certain herbicides. The polypeptide is Glutathione S-transferase U16 (GSTU16) (Arabidopsis thaliana (Mouse-ear cress)).